Consider the following 699-residue polypeptide: Elongation factor G 2 (699 aa).

The region spanning 8 to 290 is the tr-type G domain; that stretch reads ERYRNIGICA…AVIEYLPSPT (283 aa). Residues 17-24, 88-92, and 142-145 each bind GTP; these read AHVDAGKT, DTPGH, and NKMD.

It belongs to the TRAFAC class translation factor GTPase superfamily. Classic translation factor GTPase family. EF-G/EF-2 subfamily.

It localises to the cytoplasm. Functionally, catalyzes the GTP-dependent ribosomal translocation step during translation elongation. During this step, the ribosome changes from the pre-translocational (PRE) to the post-translocational (POST) state as the newly formed A-site-bound peptidyl-tRNA and P-site-bound deacylated tRNA move to the P and E sites, respectively. Catalyzes the coordinated movement of the two tRNA molecules, the mRNA and conformational changes in the ribosome. The sequence is that of Elongation factor G 2 from Colwellia psychrerythraea (strain 34H / ATCC BAA-681) (Vibrio psychroerythus).